The primary structure comprises 146 residues: THWTAEERHYITSMWDKINVAEIGGESLARMLIVYPWTQKFFSDFGNLTSSSAIMHNVKIQEHGKKVLNSFGSAVKNMDHIKETFADLSKLHCETLHVDPENFKLLGSILIIVLAMHFGKEPTPTWQAAWQKLVSAVAHALTLQYH.

Blocked amino end (Thr) is present on Thr-1. Residues 2-146 (HWTAEERHYI…VAHALTLQYH (145 aa)) enclose the Globin domain. Heme b is bound by residues His-63 and His-92.

The protein belongs to the globin family. Heterotetramer of two alpha chains and two beta chains. In terms of tissue distribution, red blood cells.

Involved in oxygen transport from the lung to the various peripheral tissues. This Caretta caretta (Loggerhead sea turtle) protein is Hemoglobin subunit beta (HBB).